The following is a 122-amino-acid chain: Acidic phospholipase A2 4 (122 aa).

7 disulfide bridges follow: cysteine 26–cysteine 115, cysteine 28–cysteine 44, cysteine 43–cysteine 95, cysteine 49–cysteine 122, cysteine 50–cysteine 88, cysteine 57–cysteine 81, and cysteine 75–cysteine 86. Phenylalanine 27, glycine 29, and glycine 31 together coordinate Ca(2+). Histidine 47 is a catalytic residue. Aspartate 48 is a Ca(2+) binding site. Aspartate 89 is an active-site residue.

This sequence belongs to the phospholipase A2 family. Group II subfamily. D49 sub-subfamily. Ca(2+) is required as a cofactor. In terms of tissue distribution, expressed by the venom gland.

Its subcellular location is the secreted. The enzyme catalyses a 1,2-diacyl-sn-glycero-3-phosphocholine + H2O = a 1-acyl-sn-glycero-3-phosphocholine + a fatty acid + H(+). Its function is as follows. Snake venom phospholipase A2 (PLA2) that has high lipolytic activity. PLA2 catalyzes the calcium-dependent hydrolysis of the 2-acyl groups in 3-sn-phosphoglycerides. The chain is Acidic phospholipase A2 4 from Craspedocephalus gramineus (Bamboo pit viper).